The sequence spans 469 residues: 3-isopropylmalate dehydratase large subunit (469 aa).

Residues cysteine 347, cysteine 410, and cysteine 413 each coordinate [4Fe-4S] cluster.

This sequence belongs to the aconitase/IPM isomerase family. LeuC type 1 subfamily. Heterodimer of LeuC and LeuD. [4Fe-4S] cluster is required as a cofactor.

It catalyses the reaction (2R,3S)-3-isopropylmalate = (2S)-2-isopropylmalate. It participates in amino-acid biosynthesis; L-leucine biosynthesis; L-leucine from 3-methyl-2-oxobutanoate: step 2/4. Catalyzes the isomerization between 2-isopropylmalate and 3-isopropylmalate, via the formation of 2-isopropylmaleate. The polypeptide is 3-isopropylmalate dehydratase large subunit (Polynucleobacter necessarius subsp. necessarius (strain STIR1)).